The following is a 508-amino-acid chain: UDP-N-acetylmuramoyl-L-alanyl-D-glutamate--2,6-diaminopimelate ligase (508 aa).

A UDP-N-acetyl-alpha-D-muramoyl-L-alanyl-D-glutamate-binding site is contributed by S29. 112 to 118 lines the ATP pocket; that stretch reads GTNGKTS. UDP-N-acetyl-alpha-D-muramoyl-L-alanyl-D-glutamate contacts are provided by residues 159–160, S186, Q192, and R194; that span reads TT. Residue K226 is modified to N6-carboxylysine. Meso-2,6-diaminopimelate-binding positions include R398, 421–424, G473, and E477; that span reads DNPR. Residues 421-424 carry the Meso-diaminopimelate recognition motif motif; that stretch reads DNPR.

The protein belongs to the MurCDEF family. MurE subfamily. It depends on Mg(2+) as a cofactor. Post-translationally, carboxylation is probably crucial for Mg(2+) binding and, consequently, for the gamma-phosphate positioning of ATP.

It localises to the cytoplasm. It catalyses the reaction UDP-N-acetyl-alpha-D-muramoyl-L-alanyl-D-glutamate + meso-2,6-diaminopimelate + ATP = UDP-N-acetyl-alpha-D-muramoyl-L-alanyl-gamma-D-glutamyl-meso-2,6-diaminopimelate + ADP + phosphate + H(+). It functions in the pathway cell wall biogenesis; peptidoglycan biosynthesis. In terms of biological role, catalyzes the addition of meso-diaminopimelic acid to the nucleotide precursor UDP-N-acetylmuramoyl-L-alanyl-D-glutamate (UMAG) in the biosynthesis of bacterial cell-wall peptidoglycan. The protein is UDP-N-acetylmuramoyl-L-alanyl-D-glutamate--2,6-diaminopimelate ligase of Janthinobacterium sp. (strain Marseille) (Minibacterium massiliensis).